The chain runs to 182 residues: Heat shock protein beta-2 (182 aa).

The sHSP domain occupies 55 to 163 (PAGEGSRAGA…DTEVNEVYIS (109 aa)).

It belongs to the small heat shock protein (HSP20) family. In terms of assembly, interacts with DMPK; may enhance its kinase activity. In terms of tissue distribution, expressed preferentially in skeletal muscle and heart but not in the lens.

The protein resides in the cytoplasm. Its subcellular location is the nucleus. May regulate the kinase DMPK. This Homo sapiens (Human) protein is Heat shock protein beta-2 (HSPB2).